A 252-amino-acid polypeptide reads, in one-letter code: Imidazole glycerol phosphate synthase subunit HisF (252 aa).

Active-site residues include Asp-11 and Asp-130.

It belongs to the HisA/HisF family. In terms of assembly, heterodimer of HisH and HisF.

Its subcellular location is the cytoplasm. The catalysed reaction is 5-[(5-phospho-1-deoxy-D-ribulos-1-ylimino)methylamino]-1-(5-phospho-beta-D-ribosyl)imidazole-4-carboxamide + L-glutamine = D-erythro-1-(imidazol-4-yl)glycerol 3-phosphate + 5-amino-1-(5-phospho-beta-D-ribosyl)imidazole-4-carboxamide + L-glutamate + H(+). It participates in amino-acid biosynthesis; L-histidine biosynthesis; L-histidine from 5-phospho-alpha-D-ribose 1-diphosphate: step 5/9. In terms of biological role, IGPS catalyzes the conversion of PRFAR and glutamine to IGP, AICAR and glutamate. The HisF subunit catalyzes the cyclization activity that produces IGP and AICAR from PRFAR using the ammonia provided by the HisH subunit. In Streptococcus sanguinis (strain SK36), this protein is Imidazole glycerol phosphate synthase subunit HisF.